Here is a 232-residue protein sequence, read N- to C-terminus: Large ribosomal subunit protein uL1 (232 aa).

The protein belongs to the universal ribosomal protein uL1 family. Part of the 50S ribosomal subunit.

Functionally, binds directly to 23S rRNA. The L1 stalk is quite mobile in the ribosome, and is involved in E site tRNA release. Its function is as follows. Protein L1 is also a translational repressor protein, it controls the translation of the L11 operon by binding to its mRNA. This chain is Large ribosomal subunit protein uL1, found in Paraburkholderia phymatum (strain DSM 17167 / CIP 108236 / LMG 21445 / STM815) (Burkholderia phymatum).